A 315-amino-acid chain; its full sequence is Putative methyltransferase SPBC8D2.16c (315 aa).

Belongs to the class IV-like SAM-binding methyltransferase superfamily.

It is found in the cytoplasm. The protein resides in the nucleus. This Schizosaccharomyces pombe (strain 972 / ATCC 24843) (Fission yeast) protein is Putative methyltransferase SPBC8D2.16c.